Here is a 285-residue protein sequence, read N- to C-terminus: Transcription factor JAMYB (285 aa).

HTH myb-type domains are found at residues 26–78 (SAEL…LNYL) and 79–133 (RPDV…QKHA). 2 DNA-binding regions (H-T-H motif) span residues 54–78 (WNAL…LNYL) and 106–129 (WSKI…RTRV).

It is found in the nucleus. Probable transcription factor that may be involved in the jasmonate-dependent defense responses to the rice blast fungus Magnaporthe oryzae. Does not seem to function in the salicylic acid-dependent signaling pathway. The sequence is that of Transcription factor JAMYB from Oryza sativa subsp. japonica (Rice).